A 624-amino-acid polypeptide reads, in one-letter code: (-)-beta-phellandrene synthase 4, chloroplastic (624 aa).

The transit peptide at 1–48 directs the protein to the chloroplast; sequence MAIVSSVPLASKSCLHKSLISSIHKLKPFCRTIPTLGMSRPGKSVMPS. Positions 41–60 are disordered; sequence PGKSVMPSMSMSSPVSDDGV. A compositionally biased stretch (low complexity) spans 44 to 56; it reads SVMPSMSMSSPVS. Residues Asp375, Asp379, and Asp527 each contribute to the Mg(2+) site. Residues 375–379 carry the DDXXD motif motif; it reads DDMYD.

The protein belongs to the terpene synthase family. Tpsd subfamily. Requires Mg(2+) as cofactor. It depends on Mn(2+) as a cofactor.

It localises to the plastid. The protein localises to the chloroplast. It catalyses the reaction (2E)-geranyl diphosphate = (-)-beta-phellandrene + diphosphate. It participates in terpene metabolism; oleoresin biosynthesis. In terms of biological role, terpene synthase (TPS) involved in the biosynthesis of monoterpene natural products included in conifer oleoresin secretions and volatile emissions; these compounds contribute to biotic and abiotic stress defense against herbivores and pathogens. Catalyzes the conversion of (2E)-geranyl diphosphate (GPP) to (-)-beta-phellandrene. This is (-)-beta-phellandrene synthase 4, chloroplastic from Picea sitchensis (Sitka spruce).